A 284-amino-acid polypeptide reads, in one-letter code: 2-dehydro-3-deoxyphosphooctonate aldolase (284 aa).

It belongs to the KdsA family.

The protein resides in the cytoplasm. It catalyses the reaction D-arabinose 5-phosphate + phosphoenolpyruvate + H2O = 3-deoxy-alpha-D-manno-2-octulosonate-8-phosphate + phosphate. It participates in carbohydrate biosynthesis; 3-deoxy-D-manno-octulosonate biosynthesis; 3-deoxy-D-manno-octulosonate from D-ribulose 5-phosphate: step 2/3. The protein operates within bacterial outer membrane biogenesis; lipopolysaccharide biosynthesis. The sequence is that of 2-dehydro-3-deoxyphosphooctonate aldolase from Pectobacterium carotovorum subsp. carotovorum (strain PC1).